The sequence spans 205 residues: Ephrin-A1 (205 aa).

A signal peptide spans 1 to 17; the sequence is MEFLWAPLLGLCCSLAA. Residues 18 to 161 form the Ephrin RBD domain; sequence ADRHIVFWNS…THNPQAHVNP (144 aa). A glycan (N-linked (GlcNAc...) asparagine) is linked at Asn26. Disulfide bonds link Cys51–Cys92 and Cys80–Cys140. Ser182 is lipidated: GPI-anchor amidated serine. A propeptide spans 183–205 (removed in mature form); sequence AAPRLFPLVWAVLLLPLLLLQSQ.

This sequence belongs to the ephrin family. As to quaternary structure, monomer. Homodimer. Forms heterodimers with EPHA2. Binds to the receptor tyrosine kinases EPHA2, EPHA3, EPHA4, EPHA5, EPHA6 and EPHA7. Also binds with low affinity to EPHA1. In terms of processing, undergoes proteolysis by a metalloprotease to give rise to a soluble monomeric form. Post-translationally, N-Glycosylation is required for binding to EPHA2 receptor and inducing its internalization. As to expression, expressed in myogenic progenitor cells.

Its subcellular location is the cell membrane. The protein resides in the secreted. Functionally, cell surface GPI-bound ligand for Eph receptors, a family of receptor tyrosine kinases which are crucial for migration, repulsion and adhesion during neuronal, vascular and epithelial development. Binds promiscuously Eph receptors residing on adjacent cells, leading to contact-dependent bidirectional signaling into neighboring cells. Plays an important role in angiogenesis and tumor neovascularization. The recruitment of VAV2, VAV3 and PI3-kinase p85 subunit by phosphorylated EPHA2 is critical for EFNA1-induced RAC1 GTPase activation and vascular endothelial cell migration and assembly. Exerts anti-oncogenic effects in tumor cells through activation and down-regulation of EPHA2. Activates EPHA2 by inducing tyrosine phosphorylation which leads to its internalization and degradation. Acts as a negative regulator in the tumorigenesis of gliomas by down-regulating EPHA2 and FAK. Can evoke collapse of embryonic neuronal growth cone and regulates dendritic spine morphogenesis. The polypeptide is Ephrin-A1 (Efna1) (Mus musculus (Mouse)).